A 141-amino-acid polypeptide reads, in one-letter code: Large ribosomal subunit protein bL17 (141 aa).

This sequence belongs to the bacterial ribosomal protein bL17 family. Part of the 50S ribosomal subunit. Contacts protein L32.

The protein is Large ribosomal subunit protein bL17 of Sinorhizobium medicae (strain WSM419) (Ensifer medicae).